The sequence spans 345 residues: Transcription factor 19 (345 aa).

In terms of domain architecture, FHA spans 31 to 88 (YRLGHRADLCDVALRPQQEPGLISGIHAELHAEPRGDDWRVSLEDHSLQGTLVNNVRL). Disordered regions lie at residues 138 to 167 (RSRGETRAGAGFRPMLPSQGAPQRPLSTLS) and 190 to 277 (LTFS…KYPV). A PHD-type zinc finger spans residues 293-342 (AAPCCCLPQEETVAWVQCDGCDVWFHVACVGCSIQAAREADFRCPGCRAG). Positions 296, 298, 310, 313, 318, 321, 336, and 339 each coordinate Zn(2+).

It is found in the nucleus. In terms of biological role, potential transcription factor that may play a role in the regulation of genes involved in cell cycle G1/S transition. May bind to regulatory elements of genes, including the promoter of the transcription factor FOXO1. This is Transcription factor 19 (TCF19) from Macaca mulatta (Rhesus macaque).